The primary structure comprises 874 residues: Alanine--tRNA ligase (874 aa).

4 residues coordinate Zn(2+): H563, H567, C665, and H669.

It belongs to the class-II aminoacyl-tRNA synthetase family. Requires Zn(2+) as cofactor.

It localises to the cytoplasm. It catalyses the reaction tRNA(Ala) + L-alanine + ATP = L-alanyl-tRNA(Ala) + AMP + diphosphate. Its function is as follows. Catalyzes the attachment of alanine to tRNA(Ala) in a two-step reaction: alanine is first activated by ATP to form Ala-AMP and then transferred to the acceptor end of tRNA(Ala). Also edits incorrectly charged Ser-tRNA(Ala) and Gly-tRNA(Ala) via its editing domain. The chain is Alanine--tRNA ligase from Histophilus somni (strain 129Pt) (Haemophilus somnus).